Here is a 396-residue protein sequence, read N- to C-terminus: Ribosomal RNA large subunit methyltransferase I (396 aa).

Residues T2–R81 form the PUA domain.

It belongs to the methyltransferase superfamily. RlmI family.

It localises to the cytoplasm. It catalyses the reaction cytidine(1962) in 23S rRNA + S-adenosyl-L-methionine = 5-methylcytidine(1962) in 23S rRNA + S-adenosyl-L-homocysteine + H(+). Specifically methylates the cytosine at position 1962 (m5C1962) of 23S rRNA. The chain is Ribosomal RNA large subunit methyltransferase I from Erwinia tasmaniensis (strain DSM 17950 / CFBP 7177 / CIP 109463 / NCPPB 4357 / Et1/99).